A 1362-amino-acid polypeptide reads, in one-letter code: MEVLMAERPTQVFHNKVIDGTAMKRLISRFIDHYGIGYTSHILDQVKTLGFRQATAASISLGIDDLLTIPSKRWLVQDAEQQSVLLEKHHHYGNVHAVEKLRQSIEIWYATSEYLRQEMTPNFRMTDPFNPVHIMSFSGARGNASQVHQLVGMRGLMSDPQGQMIDLPIQSNLREGLSLTEYIISCYGARKGVVDTAIRTSDAGYLTRRLVEVVQHIVVRRTDCGTVRGISVSPRNGMMADRIFIQTLIGRVLADDIYIGSRCIATRNQDIGVGLVNRFITFRAQPISIRTPFTCRSTSWICQLCYGRSPAHDDLVELGEAVGIIAGQSIGEPGTQLTLRTFHTGGVFTGGTAEHVRAPFNGKIKFNEDLVHPTRTRHGHPAFLCSRDLYVTIESEDIIHNVCIPPKSFLLVQNDQYVESEQVIAEIRARTSTLNLKEKVRKHIYSDSEGEMHWNTDVYHAPEFTYGNIHLLPKTSHLWILLGEPWRSSLGPCSIHKDQDQMNAYSLSVKRRYISNPSVTNNQVRHKFFSSYFSGKNKKGDRIPDYSELNRMTCTGRCNLRYPGILDGNSDLLAKRRRNRVIIPLDSIQEGENQLIPSSGISIEIPRNGILRRNSILAYFDDPRYIRKSSGLTKYETRELNSIVNEENLVEYRGVKVFWPKYQKEVNPFFFIPVEVHILAESSSIMVRHNSIIGVDTQITLNRRSRVGGLVRVKKKAEKIKLIIFSGDIHFPGKTNKAFRLIPPGGGKQNSKEYKKLKNWLYIQRMKLSRYEKKYFVLVQPVVPYKKTDGINLGRLFPADLLQESDNLQLRVVNYILYYDPILEIWDTSIQLVRTCLVLNWDQDKKIEKACASFVEIRTNGLIRDFLRIDLAKSPISYTGKRNDLPGSGLISENGSDRANGNPFSSIYSYSKATIQESLNPNQGTIHTLLNRNKESQSLIILSSSNCSRIGPFNDVKYPNVIKDSIKKDPLIPIRNSLGPLGTGFPIYHFDLFSHLITHNQILVTNYLQLDNLKQIFQILKYYLLDENGKIYNPYSCSNIILNPFKLNWYFLHYNYCEETSTIVSLGQFLCENVCIAKKGPHLKSGQVLILQVDSVVIRSAKPYLATPGATVHGHYGEILYEGDTLVTFIYEKSRSGDITQGLPKVEQVLEVRSIDSISMNLEKRIEGWNKCITRILGIPWAFFIGAKLTIVQSRISLVNKVQKVYRSQGVQIHNRHIEIIVRQITSKVLVSEDEMSNVFSPGELIGLLRAERMGRALEEAICYQAVLLGITRASMNTQSFISEASFQETARVLAKAALLGRIDWLKGLKENVVLGGMIPVGSGFKTPSSEPNNIPNNIAFELKKKNLLEGEMKDILFYHRK.

Cys224, Cys295, Cys302, and Cys305 together coordinate Zn(2+).

The protein belongs to the RNA polymerase beta' chain family. RpoC2 subfamily. In plastids the minimal PEP RNA polymerase catalytic core is composed of four subunits: alpha, beta, beta', and beta''. When a (nuclear-encoded) sigma factor is associated with the core the holoenzyme is formed, which can initiate transcription. Zn(2+) is required as a cofactor.

It localises to the plastid. The protein resides in the chloroplast. It catalyses the reaction RNA(n) + a ribonucleoside 5'-triphosphate = RNA(n+1) + diphosphate. DNA-dependent RNA polymerase catalyzes the transcription of DNA into RNA using the four ribonucleoside triphosphates as substrates. This chain is DNA-directed RNA polymerase subunit beta'', found in Helianthus annuus (Common sunflower).